A 371-amino-acid chain; its full sequence is MASLLTKPKPVFLCSPSLSPRTLNTATPSLNFTRISFTHHQKLAPFKPPSLVVAFSEKGLKRDVTTAAAATEGDYRRIMLSDVLVKKKEKVVWWEREWKAMDFGAVAVVLSMHLLSLLAPFQFNWRAVSVAFGLYIVTGLLGITLSFHRNLSHKAFKLPKWLEYLFAYCGAQALQGNPIDWVSTHRYHHQFCDSDRDPHSPLDGFWFSHMNWMFDTNTITQRCGEPNNVGDLEKQPFYRFLRTTYILHPLALAVALYAMGGFPFIVWGMGVRIVWVYHITWLVNSACHVWGKQAWNTGDLSKNNWWVAALAFGEGWHNNHHAFEFSARHGLEWWQLDMTWYVVKFLQAIGLATDVKLPSEAQKQRMAFTSD.

The transit peptide at 1 to 67 (MASLLTKPKP…KGLKRDVTTA (67 aa)) directs the protein to the chloroplast. 2 helical membrane-spanning segments follow: residues 103–123 (FGAVAVVLSMHLLSLLAPFQF) and 127–147 (AVSVAFGLYIVTGLLGITLSF). The Histidine box-1 motif lies at 148 to 153 (HRNLSH). A Histidine box-2 motif is present at residues 185 to 189 (HRYHH). A helical transmembrane segment spans residues 251–271 (ALAVALYAMGGFPFIVWGMGV). Positions 317-321 (HNNHH) match the Histidine box-3 motif.

This sequence belongs to the fatty acid desaturase type 1 family. It depends on Fe(2+) as a cofactor. As to expression, highly expressed in young leaves. Low expression in roots.

It localises to the plastid. The protein localises to the chloroplast membrane. It catalyses the reaction a 1-acyl-2-hexadecanoyl-glycerolipid + 2 reduced [2Fe-2S]-[ferredoxin] + O2 + 2 H(+) = a 1-acyl-2-[(7Z)-hexadecenoyl]-glycerolipid + 2 oxidized [2Fe-2S]-[ferredoxin] + 2 H2O. It functions in the pathway lipid metabolism; oxylipin biosynthesis. Its pathway is lipid metabolism; polyunsaturated fatty acid biosynthesis. Functionally, fatty acid desaturase involved in the first desaturation step leading to the formation of hexadeca 7,10,13-trienoic acid (16:3(7Z,10Z,13Z)), the major functional components of thylakoid membranes. Required for chloroplast biogenesis at low temperature. Also indirectly involved in the production of the oxylipin dinor-oxo-phyto-dienoic acid implicated in wound signaling. In Arabidopsis thaliana (Mouse-ear cress), this protein is Palmitoyl-monogalactosyldiacylglycerol delta-7 desaturase, chloroplastic.